A 156-amino-acid polypeptide reads, in one-letter code: Small ribosomal subunit protein bS16 (156 aa).

Residues 124–135 are compositionally biased toward low complexity; the sequence is AAKAAEAETPAE. Positions 124–156 are disordered; the sequence is AAKAAEAETPAEVQHDDEKVELADVEESAPESV. Basic and acidic residues predominate over residues 136–145; that stretch reads VQHDDEKVEL. Positions 146–156 are enriched in acidic residues; sequence ADVEESAPESV.

It belongs to the bacterial ribosomal protein bS16 family.

This is Small ribosomal subunit protein bS16 from Bifidobacterium animalis subsp. lactis (strain AD011).